The primary structure comprises 258 residues: Isoprenyl transferase 2 (258 aa).

D39 is a catalytic residue. Mg(2+) is bound at residue D39. Substrate-binding positions include 40 to 43 (GNRR), W44, R52, H57, and 85 to 87 (SND). Catalysis depends on N88, which acts as the Proton acceptor. Residues R92, R207, and 213–215 (RLS) contribute to the substrate site. E226 is a binding site for Mg(2+).

The protein belongs to the UPP synthase family. As to quaternary structure, homodimer. Mg(2+) is required as a cofactor.

In terms of biological role, catalyzes the condensation of isopentenyl diphosphate (IPP) with allylic pyrophosphates generating different type of terpenoids. The polypeptide is Isoprenyl transferase 2 (Tropheryma whipplei (strain Twist) (Whipple's bacillus)).